Here is a 452-residue protein sequence, read N- to C-terminus: Probable 1,4-beta-D-glucan cellobiohydrolase A (452 aa).

The N-terminal stretch at 1–17 (MHQRALLFSALAVAANA) is a signal peptide. Asn81 carries an N-linked (GlcNAc...) asparagine glycan. The Nucleophile role is filled by Glu226. Catalysis depends on Glu231, which acts as the Proton donor. Asn284 carries an N-linked (GlcNAc...) asparagine glycan. Residues 405-431 (ADPSKPGVARGTCEHGAGDPENVESQH) are disordered.

Belongs to the glycosyl hydrolase 7 (cellulase C) family.

It localises to the secreted. The catalysed reaction is Hydrolysis of (1-&gt;4)-beta-D-glucosidic linkages in cellulose and cellotetraose, releasing cellobiose from the non-reducing ends of the chains.. Functionally, the biological conversion of cellulose to glucose generally requires three types of hydrolytic enzymes: (1) Endoglucanases which cut internal beta-1,4-glucosidic bonds; (2) Exocellobiohydrolases that cut the disaccharide cellobiose from the non-reducing end of the cellulose polymer chain; (3) Beta-1,4-glucosidases which hydrolyze the cellobiose and other short cello-oligosaccharides to glucose. The sequence is that of Probable 1,4-beta-D-glucan cellobiohydrolase A (cbhA) from Aspergillus fumigatus (strain CBS 144.89 / FGSC A1163 / CEA10) (Neosartorya fumigata).